A 1290-amino-acid polypeptide reads, in one-letter code: Vacuolating cytotoxin autotransporter (1290 aa).

An N-terminal signal peptide occupies residues 1–33 (MEIQQTHRKINRPLVSLALVGALVSITPQQSHA). A disordered region spans residues 326-374 (PPEGGYKDKPKDKPSNTTQNNANNNQQNSAQNNSNTQVINPPNSAQKTE). Positions 330–339 (GYKDKPKDKP) are enriched in basic and acidic residues. A compositionally biased stretch (low complexity) spans 340–362 (SNTTQNNANNNQQNSAQNNSNTQ). A compositionally biased stretch (polar residues) spans 363–374 (VINPPNSAQKTE). The Autotransporter domain occupies 1018–1290 (KYEKPTNVWA…ASNLGMRYSF (273 aa)).

The protein localises to the periplasm. It is found in the secreted. Its subcellular location is the cell surface. It localises to the cell outer membrane. Its function is as follows. Induces vacuolation of eukaryotic cells. Causes ulceration and gastric lesions. This Helicobacter pylori (strain ATCC 700392 / 26695) (Campylobacter pylori) protein is Vacuolating cytotoxin autotransporter (vacA).